Reading from the N-terminus, the 193-residue chain is Calcium-binding protein E63-1 (193 aa).

EF-hand domains are found at residues 35 to 70, 71 to 106, 127 to 162, and 163 to 193; these read VEIK…LGIN, VSDE…IQAL, DVTE…IGEP, and LNEQ…RLLL. Ca(2+)-binding residues include Asp48, Asn50, Asp52, Arg54, and Glu59. Ca(2+)-binding residues include Asp140, Asp142, Asn144, Glu151, Asp176, Asp178, Asp180, Arg182, and Glu187.

This chain is Calcium-binding protein E63-1 (Eip63F-1), found in Drosophila melanogaster (Fruit fly).